A 329-amino-acid chain; its full sequence is MTHFNKGPSYGLSAEVKNKIASKYDHQAEEDLRNWIEEVTGMSIGPNFQLGLKDGIILCELINKLQPGSVKKVNESSLNWPQLENIGNFIKAIQAYGMKPHDIFEANDLFENGNMTQVQTTLVALAGLAKTKGFHTTIDIGVKYAEKQTRRFDEGKLKAGQSVIGLQMGTNKCASQAGMTAYGTRRHLYDPKMQTDKPFDQTTISLQMGTNKGASQAGMLAPGTRRDIYDQKLTLQPVDNSTISLQMGTNKVASQKGMSVYGLGRQVYDPKYCAAPTEPVIHNGSQGTGTNGSEISDSDYQAEYPDEYHGEYQDDYPRDYQYSDQGIDY.

The residue at position 23 (K23) is an N6-acetyllysine. Positions 26 to 130 (HQAEEDLRNW…TLVALAGLAK (105 aa)) constitute a Calponin-homology (CH) domain. At K158 the chain carries N6-methyllysine. 3 Calponin-like repeats span residues 164 to 189 (IGLQMGTNKCASQAGMTAYGTRRHLY), 204 to 229 (ISLQMGTNKGASQAGMLAPGTRRDIY), and 243 to 268 (ISLQMGTNKVASQKGMSVYGLGRQVY). The tract at residues 279-329 (PVIHNGSQGTGTNGSEISDSDYQAEYPDEYHGEYQDDYPRDYQYSDQGIDY) is disordered. Over residues 306 to 318 (DEYHGEYQDDYPR) the composition is skewed to basic and acidic residues. Phosphoserine is present on S323.

It belongs to the calponin family. Expressed in both non-smooth muscle tissues as well as smooth muscle tissues.

Its function is as follows. Thin filament-associated protein that is implicated in the regulation and modulation of smooth muscle contraction. It is capable of binding to actin, calmodulin and tropomyosin. The interaction of calponin with actin inhibits the actomyosin Mg-ATPase activity. This is Calponin-3 (CNN3) from Homo sapiens (Human).